Here is a 147-residue protein sequence, read N- to C-terminus: Large ribosomal subunit protein uL15 (147 aa).

Residues 1–59 are disordered; that stretch reads MKLYELKPAPGSKKNRKRVGRGESSGHGKTSTRGHKGQWARSGGGVRPGFEGGQMPLTR. Positions 42–52 are enriched in gly residues; sequence SGGGVRPGFEG.

Belongs to the universal ribosomal protein uL15 family. Part of the 50S ribosomal subunit.

In terms of biological role, binds to the 23S rRNA. The polypeptide is Large ribosomal subunit protein uL15 (Caldicellulosiruptor bescii (strain ATCC BAA-1888 / DSM 6725 / KCTC 15123 / Z-1320) (Anaerocellum thermophilum)).